A 263-amino-acid chain; its full sequence is UPF0246 protein Mmar10_0828 (263 aa).

This sequence belongs to the UPF0246 family.

In Maricaulis maris (strain MCS10) (Caulobacter maris), this protein is UPF0246 protein Mmar10_0828.